Consider the following 245-residue polypeptide: DNA polymerase sliding clamp (245 aa).

Belongs to the PCNA family. As to quaternary structure, homotrimer. The subunits circularize to form a toroid; DNA passes through its center. Replication factor C (RFC) is required to load the toroid on the DNA.

Functionally, sliding clamp subunit that acts as a moving platform for DNA processing. Responsible for tethering the catalytic subunit of DNA polymerase and other proteins to DNA during high-speed replication. This Picrophilus torridus (strain ATCC 700027 / DSM 9790 / JCM 10055 / NBRC 100828 / KAW 2/3) protein is DNA polymerase sliding clamp.